We begin with the raw amino-acid sequence, 386 residues long: HORMA domain-containing protein 1 (386 aa).

In terms of domain architecture, HORMA spans 24 to 224 (TQSLILVKRL…TPFHVLKVKV (201 aa)). 2 disordered regions span residues 237–274 (SIFKKQASKQPQTDEEKPDLSINDDLAQDNNGDRKRDD) and 289–386 (EDGN…TPLN). Positions 289–313 (EDGNLQSDDSQNSALADSQEKTSQA) are enriched in polar residues. Residues 329 to 343 (QKPDLELKNQKESAR) show a composition bias toward basic and acidic residues.

Its subcellular location is the nucleus. It is found in the chromosome. Functionally, plays a key role in meiotic progression by ensuring that sufficient numbers of processed DNA double-strand breaks (DSBs) are available for successful homology search, promoting synaptonemal-complex formation independently and playing key role in the male mid-pachytene checkpoint and the female meiotic prophase checkpoint. The chain is HORMA domain-containing protein 1 (hormad1) from Xenopus laevis (African clawed frog).